The primary structure comprises 85 residues: Homeobox protein knotted-1-like 4 (85 aa).

One can recognise an ELK domain in the interval Glu1 to Phe21. The homeobox; TALE-type DNA-binding region spans Ser22–Ser85.

Belongs to the TALE/KNOX homeobox family. In terms of tissue distribution, strongly expressed in ear inflorescence primordia and shoot meristem. Weakly expressed in embryos. Absent from leaves.

The protein resides in the nucleus. Probably binds to the DNA sequence 5'-TGAC-3'. The polypeptide is Homeobox protein knotted-1-like 4 (KNOX4) (Zea mays (Maize)).